A 281-amino-acid polypeptide reads, in one-letter code: UPF0046 protein C25E10.12 (281 aa).

This sequence belongs to the UPF0046 family.

This Caenorhabditis elegans protein is UPF0046 protein C25E10.12.